A 446-amino-acid chain; its full sequence is Methylenetetrahydrofolate--tRNA-(uracil-5-)-methyltransferase TrmFO (446 aa).

8 to 13 serves as a coordination point for FAD; that stretch reads GGGLAG.

This sequence belongs to the MnmG family. TrmFO subfamily. The cofactor is FAD.

The protein localises to the cytoplasm. It carries out the reaction uridine(54) in tRNA + (6R)-5,10-methylene-5,6,7,8-tetrahydrofolate + NADH + H(+) = 5-methyluridine(54) in tRNA + (6S)-5,6,7,8-tetrahydrofolate + NAD(+). It catalyses the reaction uridine(54) in tRNA + (6R)-5,10-methylene-5,6,7,8-tetrahydrofolate + NADPH + H(+) = 5-methyluridine(54) in tRNA + (6S)-5,6,7,8-tetrahydrofolate + NADP(+). Its function is as follows. Catalyzes the folate-dependent formation of 5-methyl-uridine at position 54 (M-5-U54) in all tRNAs. This chain is Methylenetetrahydrofolate--tRNA-(uracil-5-)-methyltransferase TrmFO, found in Zymomonas mobilis subsp. mobilis (strain ATCC 31821 / ZM4 / CP4).